Reading from the N-terminus, the 156-residue chain is MLHIKTIEGQLDAKGLKFAIVATRFNDFIVDRLIGGACDYLQRHGCDRENLTIVRIPGAFEMPLVAKKLAHSGKYDGIIALGAVIRGATPHFDFVSNEASKGLAQACLESGVPLGFGLLTTDNIEQAIERAGSKAGNKGAEAAAAVLETVRVMEQL.

5-amino-6-(D-ribitylamino)uracil-binding positions include Phe-25, 59–61 (AFE), and 83–85 (AVI). Residue 88–89 (AT) participates in (2S)-2-hydroxy-3-oxobutyl phosphate binding. His-91 functions as the Proton donor in the catalytic mechanism. Position 116 (Phe-116) interacts with 5-amino-6-(D-ribitylamino)uracil. A (2S)-2-hydroxy-3-oxobutyl phosphate-binding site is contributed by Arg-130.

The protein belongs to the DMRL synthase family.

The enzyme catalyses (2S)-2-hydroxy-3-oxobutyl phosphate + 5-amino-6-(D-ribitylamino)uracil = 6,7-dimethyl-8-(1-D-ribityl)lumazine + phosphate + 2 H2O + H(+). It participates in cofactor biosynthesis; riboflavin biosynthesis; riboflavin from 2-hydroxy-3-oxobutyl phosphate and 5-amino-6-(D-ribitylamino)uracil: step 1/2. Functionally, catalyzes the formation of 6,7-dimethyl-8-ribityllumazine by condensation of 5-amino-6-(D-ribitylamino)uracil with 3,4-dihydroxy-2-butanone 4-phosphate. This is the penultimate step in the biosynthesis of riboflavin. The sequence is that of 6,7-dimethyl-8-ribityllumazine synthase from Nitratidesulfovibrio vulgaris (strain ATCC 29579 / DSM 644 / CCUG 34227 / NCIMB 8303 / VKM B-1760 / Hildenborough) (Desulfovibrio vulgaris).